Here is a 147-residue protein sequence, read N- to C-terminus: Thyrotropin subunit beta (147 aa).

A signal peptide spans 1 to 20 (MRVVLLASAVLCLLAGQVLS). Disulfide bonds link C22-C72, C36-C87, C39-C126, C47-C103, C51-C105, and C108-C115. N43 carries an N-linked (GlcNAc...) asparagine glycan.

This sequence belongs to the glycoprotein hormones subunit beta family. As to quaternary structure, heterodimer of a common alpha chain and a unique beta chain which confers biological specificity to thyrotropin, lutropin, follitropin and gonadotropin.

The protein localises to the secreted. Indispensable for the control of thyroid structure and metabolism. May play some role in the biological processes of the immature fishes. The polypeptide is Thyrotropin subunit beta (tshb) (Anguilla anguilla (European freshwater eel)).